Here is a 328-residue protein sequence, read N- to C-terminus: YDG domain-containing protein At5g47150 (328 aa).

The YDG domain maps to 176–320; that stretch reads GSVPGINIGD…KSVYKFKLCR (145 aa).

It is found in the nucleus. This is YDG domain-containing protein At5g47150 from Arabidopsis thaliana (Mouse-ear cress).